The following is a 1322-amino-acid chain: Chitin synthase chs-1 (1322 aa).

Topologically, residues 1–39 (MNDGENYWNAFRSHKRSATDGPTLSPWMVTVLQATKLLL) are extracellular. Residues 40–60 (FALCNIVLTLGSVFSKLIVLI) traverse the membrane as a helical segment. Over 61-128 (MATNIVPRAH…KGQCGQLVKS (68 aa)) the chain is Cytoplasmic. A helical membrane pass occupies residues 129-149 (VVVLESLRAIGLAVLSFHVFP). Residues 150–156 (QLDLARC) are Extracellular-facing. The helical transmembrane segment at 157–177 (LVLSACFPLVAVLQRSLVAMV) threads the bilayer. Over 178–193 (SAARTGRSFRNRLGRC) the chain is Cytoplasmic. The chain crosses the membrane as a helical span at residues 194–214 (FVAIPHVIMFLVLMSSCYVWA). The Extracellular segment spans residues 215–221 (LFDNKFT). Residues 222–242 (AIIALPIGVICTSAGFWESWI) traverse the membrane as a helical segment. Residues 243-269 (DTTHSGTSFDELYRLKYAVRKMNTTTK) lie on the Cytoplasmic side of the membrane. Residues 270 to 290 (LIVSLMRIVCTVSVLVSAVYI) form a helical membrane-spanning segment. Topologically, residues 291 to 316 (NDHKKLNSSHFVKAFFSFSTRQPHTR) are extracellular. An N-linked (GlcNAc...) asparagine glycan is attached at Asn-297. A helical transmembrane segment spans residues 317–337 (LLLLATGIIVLHFVMRGISRF). Over 338–342 (LAALD) the chain is Cytoplasmic. A helical transmembrane segment spans residues 343 to 363 (LHPFSFVHPLSIAPLIAYGYV). At 364–396 (RYACQSPTCSIARRLARFGLHWVCDQWFQSARG) the chain is on the extracellular side. The chain crosses the membrane as a helical span at residues 397–417 (IASPDFYICLIWLLVGCYRGW). At 418-836 (RLVRQRYFDT…AISYAYIAYQ (419 aa)) the chain is on the cytoplasmic side. Residues 455–486 (LNRQEKTMLTEEEDISDENDELRIRNDEVDRV) are a coiled coil. Residues 837–857 (FLVIFFSMLGPAIIFTMLVFA) form a helical membrane-spanning segment. The Extracellular portion of the chain corresponds to 858–865 (QVAAFELR). The helical transmembrane segment at 866 to 886 (GSDVMLYNGIPIGFFIVLCFT) threads the bilayer. The Cytoplasmic segment spans residues 887-892 (TESNIQ). The helical transmembrane segment at 893-913 (LIYAKYMSIAYAFVMLAVLVA) threads the bilayer. The Extracellular segment spans residues 914–922 (TSSQIVLET). Residues 923–943 (VLAPTSLFIVTMVGIFFFAAC) traverse the membrane as a helical segment. The Cytoplasmic portion of the chain corresponds to 944–951 (LHPKEFTN). The chain crosses the membrane as a helical span at residues 952-972 (IIHGVVFFLMIPSTYVFLTLY). Topologically, residues 973–1148 (SLINLNVITW…AVAEGLASLR (176 aa)) are extracellular. Positions 1019–1053 (ISCREKKEHEERREKMEKKMQRMELALRSIESGAD) form a coiled coil. Residues 1149–1169 (NQIAFTILLVNSLLALAIFLI) traverse the membrane as a helical segment. At 1170–1209 (QKHKNVLSIKFSPIKNFRWTKMNEMTGQYEETDEPLKIDP) the chain is on the cytoplasmic side. The chain crosses the membrane as a helical span at residues 1210–1230 (LGMGIVVFLLIILFVQTLGML). Over 1231–1322 (LHRLNTMIGA…MQRSALSTTE (92 aa)) the chain is Extracellular.

This sequence belongs to the chitin synthase family. Class IV subfamily.

It is found in the cell membrane. The enzyme catalyses [(1-&gt;4)-N-acetyl-beta-D-glucosaminyl](n) + UDP-N-acetyl-alpha-D-glucosamine = [(1-&gt;4)-N-acetyl-beta-D-glucosaminyl](n+1) + UDP + H(+). Functionally, essential for the embryonic synthesis of chitin, a component of the eggshell. This chain is Chitin synthase chs-1, found in Caenorhabditis elegans.